Reading from the N-terminus, the 98-residue chain is uncharacterized protein (98 aa).

A run of 2 helical transmembrane segments spans residues 8–28 (LILKFNMISFFSAVSLLHYFL) and 73–93 (LWFILYKVLICIYTYSISISL).

The protein localises to the membrane. This is an uncharacterized protein from Saccharomyces cerevisiae (strain ATCC 204508 / S288c) (Baker's yeast).